The sequence spans 500 residues: Glycerol kinase (500 aa).

Thr-14 is an ADP binding site. ATP is bound by residues Thr-14, Thr-15, and Ser-16. Thr-14 serves as a coordination point for sn-glycerol 3-phosphate. ADP is bound at residue Arg-18. The sn-glycerol 3-phosphate site is built by Arg-84, Glu-85, and Tyr-136. Residues Arg-84, Glu-85, and Tyr-136 each contribute to the glycerol site. The residue at position 232 (His-232) is a Phosphohistidine; by HPr. Residue Asp-246 participates in sn-glycerol 3-phosphate binding. Residues Asp-246 and Gln-247 each coordinate glycerol. ADP-binding residues include Thr-268 and Gly-311. Residues Thr-268, Gly-311, Gln-315, and Gly-412 each coordinate ATP. ADP contacts are provided by Gly-412 and Asn-416.

This sequence belongs to the FGGY kinase family. Homotetramer and homodimer (in equilibrium). In terms of processing, the phosphoenolpyruvate-dependent sugar phosphotransferase system (PTS), including enzyme I, and histidine-containing protein (HPr) are required for the phosphorylation, which leads to the activation of the enzyme.

The enzyme catalyses glycerol + ATP = sn-glycerol 3-phosphate + ADP + H(+). It participates in polyol metabolism; glycerol degradation via glycerol kinase pathway; sn-glycerol 3-phosphate from glycerol: step 1/1. With respect to regulation, activated by phosphorylation and inhibited by fructose 1,6-bisphosphate (FBP). In terms of biological role, key enzyme in the regulation of glycerol uptake and metabolism. Catalyzes the phosphorylation of glycerol to yield sn-glycerol 3-phosphate. This is Glycerol kinase from Streptococcus uberis (strain ATCC BAA-854 / 0140J).